Consider the following 130-residue polypeptide: Small ribosomal subunit protein uS9 (130 aa).

This sequence belongs to the universal ribosomal protein uS9 family.

The sequence is that of Small ribosomal subunit protein uS9 from Burkholderia vietnamiensis (strain G4 / LMG 22486) (Burkholderia cepacia (strain R1808)).